Reading from the N-terminus, the 150-residue chain is Small ribosomal subunit protein eS6 (150 aa).

This sequence belongs to the eukaryotic ribosomal protein eS6 family.

In Caldivirga maquilingensis (strain ATCC 700844 / DSM 13496 / JCM 10307 / IC-167), this protein is Small ribosomal subunit protein eS6.